The chain runs to 306 residues: Mycothiol acetyltransferase (306 aa).

N-acetyltransferase domains lie at 17–163 (VARV…RPMP) and 166–306 (LALS…YRRA). Glutamate 48 is a 1D-myo-inositol 2-(L-cysteinylamino)-2-deoxy-alpha-D-glucopyranoside binding site. 89–91 (IVV) contributes to the acetyl-CoA binding site. Positions 192, 232, and 239 each coordinate 1D-myo-inositol 2-(L-cysteinylamino)-2-deoxy-alpha-D-glucopyranoside. Acetyl-CoA-binding positions include 243–245 (LGV) and 250–256 (AARGLGS). Tyrosine 277 serves as a coordination point for 1D-myo-inositol 2-(L-cysteinylamino)-2-deoxy-alpha-D-glucopyranoside.

Belongs to the acetyltransferase family. MshD subfamily. In terms of assembly, monomer.

The enzyme catalyses 1D-myo-inositol 2-(L-cysteinylamino)-2-deoxy-alpha-D-glucopyranoside + acetyl-CoA = mycothiol + CoA + H(+). Its function is as follows. Catalyzes the transfer of acetyl from acetyl-CoA to desacetylmycothiol (Cys-GlcN-Ins) to form mycothiol. This chain is Mycothiol acetyltransferase, found in Clavibacter michiganensis subsp. michiganensis (strain NCPPB 382).